The chain runs to 251 residues: MRKPIIAGNWKMNKVLSEATSFVEEVKGAVPSPESVDSVVCAPALFLDRLVEATKGTDLKIGAQNMHFEENGAFTGEVSPVALADLGVNYVILGHSERREMFAETDETVNQKTIAAFKHGLTPIVCCGETNEEYEQDQTKTVVANQVQKALAGLTDEQVKQTVIAYEPIWAIGTGKSSTAEGANEVCAYIRSVVAEQFSQDVADAVRIQYGGSVKPANIKEYMSQSDIDGALVGGASLEADSFLQLLEAGK.

9 to 11 (NWK) contacts substrate. His95 functions as the Electrophile in the catalytic mechanism. The active-site Proton acceptor is the Glu167. Substrate-binding positions include Gly173, Ser213, and 234–235 (GG). Ser213 carries the post-translational modification Phosphoserine.

The protein belongs to the triosephosphate isomerase family. In terms of assembly, homodimer.

Its subcellular location is the cytoplasm. It catalyses the reaction D-glyceraldehyde 3-phosphate = dihydroxyacetone phosphate. It participates in carbohydrate biosynthesis; gluconeogenesis. Its pathway is carbohydrate degradation; glycolysis; D-glyceraldehyde 3-phosphate from glycerone phosphate: step 1/1. Its function is as follows. Involved in the gluconeogenesis. Catalyzes stereospecifically the conversion of dihydroxyacetone phosphate (DHAP) to D-glyceraldehyde-3-phosphate (G3P). The polypeptide is Triosephosphate isomerase (Priestia megaterium (strain DSM 319 / IMG 1521) (Bacillus megaterium)).